We begin with the raw amino-acid sequence, 545 residues long: Glucose-6-phosphate isomerase (545 aa).

The active-site Proton donor is the glutamate 351. Residues histidine 382 and lysine 510 contribute to the active site.

Belongs to the GPI family.

The protein localises to the cytoplasm. The enzyme catalyses alpha-D-glucose 6-phosphate = beta-D-fructose 6-phosphate. The protein operates within carbohydrate biosynthesis; gluconeogenesis. Its pathway is carbohydrate degradation; glycolysis; D-glyceraldehyde 3-phosphate and glycerone phosphate from D-glucose: step 2/4. Its function is as follows. Catalyzes the reversible isomerization of glucose-6-phosphate to fructose-6-phosphate. The polypeptide is Glucose-6-phosphate isomerase (Helicobacter pylori (strain Shi470)).